A 163-amino-acid chain; its full sequence is Cyanate hydratase (163 aa).

Residues Arg103, Glu106, and Ser129 contribute to the active site.

It belongs to the cyanase family.

The enzyme catalyses cyanate + hydrogencarbonate + 3 H(+) = NH4(+) + 2 CO2. Catalyzes the reaction of cyanate with bicarbonate to produce ammonia and carbon dioxide. The chain is Cyanate hydratase from Paracoccidioides brasiliensis (strain Pb18).